The chain runs to 657 residues: Matrix metalloproteinase-15 (657 aa).

Positions 1 to 36 are cleaved as a signal peptide; it reads MGSDRSALGRPGCTGSCLSSRASLLPLLLVLLDCLG. A propeptide spanning residues 37 to 127 is cleaved from the precursor; it reads HGTASKDAEV…KANLRRRRKR (91 aa). A Cysteine switch motif is present at residues 105–112; sequence PRCGVPDQ. Cys-107 serves as a coordination point for Zn(2+). The Extracellular portion of the chain corresponds to 128–614; that stretch reads YTLTGKAWNN…MEEVVRTVNV (487 aa). Asn-146 carries an N-linked (GlcNAc...) asparagine glycan. His-255 contacts Zn(2+). The active site involves Glu-256. Zn(2+)-binding residues include His-259 and His-265. The interval 295–365 is disordered; sequence IQQLYGSPDG…ERPDQYGPNI (71 aa). The span at 328–337 shows a compositional bias: pro residues; sequence PRPPQPPHPG. Hemopexin repeat units follow at residues 363–411, 412–457, 459–507, and 508–555; these read PNIC…WRGL, PGNI…GTDI, YDRI…QGIP, and TSPK…FMGC. A disulfide bond links Cys-366 and Cys-555. Asn-414 carries an N-linked (GlcNAc...) asparagine glycan. Residues 561-599 form a disordered region; that stretch reads PRSRWPDVARPPFNPNGGAEPEADGDSKEENAGDKDEGS. Positions 585–599 are enriched in basic and acidic residues; the sequence is GDSKEENAGDKDEGS. The chain crosses the membrane as a helical span at residues 615–635; the sequence is VMVLVPLLLLLCILGLAFALV. Over 636–657 the chain is Cytoplasmic; sequence QMQRKGAPRMLLYCKRSLQEWV.

This sequence belongs to the peptidase M10A family. Zn(2+) is required as a cofactor. Requires Ca(2+) as cofactor. The precursor is cleaved by a furin endopeptidase.

The protein localises to the membrane. In terms of biological role, endopeptidase that degrades various components of the extracellular matrix. May activate progelatinase A. This chain is Matrix metalloproteinase-15 (Mmp15), found in Mus musculus (Mouse).